Here is a 119-residue protein sequence, read N- to C-terminus: Large ribosomal subunit protein bL20 (119 aa).

Belongs to the bacterial ribosomal protein bL20 family.

Its function is as follows. Binds directly to 23S ribosomal RNA and is necessary for the in vitro assembly process of the 50S ribosomal subunit. It is not involved in the protein synthesizing functions of that subunit. This chain is Large ribosomal subunit protein bL20, found in Rhodopseudomonas palustris (strain ATCC BAA-98 / CGA009).